Here is a 572-residue protein sequence, read N- to C-terminus: NADH-ubiquinone oxidoreductase chain 5 (572 aa).

A run of 17 helical transmembrane segments spans residues 6-26 (FFFL…YLMI), 44-64 (VVMT…VMYI), 86-106 (IMIV…PNLI), 107-127 (SILL…IYYQ), 147-167 (VAIL…YIYY), 179-201 (IITL…SSWL), 208-230 (PTPV…LLIR), 234-254 (MLMV…TMFM), 268-288 (IIAL…SMGY), 291-311 (LAFF…MCAG), 337-357 (SICF…AGFY), 372-394 (NFFI…FRLF), 422-442 (IGLL…IFPV), 454-474 (FLTL…SDFV), 479-499 (LFSL…FMPF), 524-544 (WGEL…INYI), and 552-572 (FKVY…LFFL).

The protein belongs to the complex I subunit 5 family.

It localises to the mitochondrion inner membrane. It catalyses the reaction a ubiquinone + NADH + 5 H(+)(in) = a ubiquinol + NAD(+) + 4 H(+)(out). Functionally, core subunit of the mitochondrial membrane respiratory chain NADH dehydrogenase (Complex I) that is believed to belong to the minimal assembly required for catalysis. Complex I functions in the transfer of electrons from NADH to the respiratory chain. The immediate electron acceptor for the enzyme is believed to be ubiquinone. In Locusta migratoria (Migratory locust), this protein is NADH-ubiquinone oxidoreductase chain 5 (ND5).